Here is a 204-residue protein sequence, read N- to C-terminus: High frequency lysogenization protein HflD homolog (204 aa).

It belongs to the HflD family.

It is found in the cytoplasm. Its subcellular location is the cell inner membrane. The chain is High frequency lysogenization protein HflD homolog from Xanthomonas euvesicatoria pv. vesicatoria (strain 85-10) (Xanthomonas campestris pv. vesicatoria).